The primary structure comprises 117 residues: Non-specific lipid-transfer protein 1 (117 aa).

A signal peptide spans 1 to 26 (MARAQVLLMAAALVLMLTAAPRAAVA). Intrachain disulfides connect C29/C76, C39/C53, C54/C99, and C74/C113. Residue D33 is the site of Cis-14-hydroxy-10,13-dioxo-7-heptadecenoic acid aspartate ester attachment.

Belongs to the plant LTP family. In terms of tissue distribution, aleurone layer of developing and germinating seeds.

Its function is as follows. Plant non-specific lipid-transfer proteins transfer phospholipids as well as galactolipids across membranes. May play a role in wax or cutin deposition in the cell walls of expanding epidermal cells and certain secretory tissues. The chain is Non-specific lipid-transfer protein 1 (LTP1) from Hordeum vulgare (Barley).